A 105-amino-acid polypeptide reads, in one-letter code: Probable molt-inhibiting hormone (105 aa).

A signal peptide spans 1 to 28 (MYRMPMRFWLTAVVMVVVGALLLDTASA). Cystine bridges form between Cys35-Cys72, Cys52-Cys68, and Cys55-Cys81.

The protein belongs to the arthropod CHH/MIH/GIH/VIH hormone family. As to expression, expressed in the postmolt, intermolt, and premolt stages of the shrimp eyestalks and the brain.

It is found in the secreted. In terms of biological role, inhibits Y-organs where molting hormone (ecdysteroid) is secreted. A molting cycle is initiated when MIH secretion diminishes or stops. The protein is Probable molt-inhibiting hormone of Metapenaeus ensis (Greasyback shrimp).